Here is a 349-residue protein sequence, read N- to C-terminus: Polyamine aminopropyltransferase 2 (349 aa).

Residues 29–267 enclose the PABS domain; sequence DGAITAIEDS…SSWGFLLASD (239 aa). Gln-60 is an S-methyl-5'-thioadenosine binding site. Spermidine is bound by residues His-91 and Glu-115. S-methyl-5'-thioadenosine contacts are provided by residues Asp-135 and 167 to 168; that span reads DG. Asp-185 functions as the Proton acceptor in the catalytic mechanism. Residue Pro-194 participates in S-methyl-5'-thioadenosine binding.

The protein belongs to the spermidine/spermine synthase family. In terms of assembly, homodimer or homotetramer.

Its subcellular location is the cytoplasm. The enzyme catalyses S-adenosyl 3-(methylsulfanyl)propylamine + putrescine = S-methyl-5'-thioadenosine + spermidine + H(+). The protein operates within amine and polyamine biosynthesis; spermidine biosynthesis; spermidine from putrescine: step 1/1. Functionally, catalyzes the irreversible transfer of a propylamine group from the amino donor S-adenosylmethioninamine (decarboxy-AdoMet) to putrescine (1,4-diaminobutane) to yield spermidine. This is Polyamine aminopropyltransferase 2 from Pseudomonas aeruginosa (strain ATCC 15692 / DSM 22644 / CIP 104116 / JCM 14847 / LMG 12228 / 1C / PRS 101 / PAO1).